Here is a 935-residue protein sequence, read N- to C-terminus: Isoleucine--tRNA ligase (935 aa).

A 'HIGH' region motif is present at residues 58–68 (PYANGSIHVGH). Glu-558 is an L-isoleucyl-5'-AMP binding site. The 'KMSKS' region motif lies at 599–603 (KMSKS). An ATP-binding site is contributed by Lys-602. 4 residues coordinate Zn(2+): Cys-897, Cys-900, Cys-917, and Cys-920.

Belongs to the class-I aminoacyl-tRNA synthetase family. IleS type 1 subfamily. In terms of assembly, monomer. Requires Zn(2+) as cofactor.

It localises to the cytoplasm. The catalysed reaction is tRNA(Ile) + L-isoleucine + ATP = L-isoleucyl-tRNA(Ile) + AMP + diphosphate. In terms of biological role, catalyzes the attachment of isoleucine to tRNA(Ile). As IleRS can inadvertently accommodate and process structurally similar amino acids such as valine, to avoid such errors it has two additional distinct tRNA(Ile)-dependent editing activities. One activity is designated as 'pretransfer' editing and involves the hydrolysis of activated Val-AMP. The other activity is designated 'posttransfer' editing and involves deacylation of mischarged Val-tRNA(Ile). The chain is Isoleucine--tRNA ligase from Francisella tularensis subsp. novicida (strain U112).